The sequence spans 250 residues: Indole-3-glycerol phosphate synthase (250 aa).

Belongs to the TrpC family.

It catalyses the reaction 1-(2-carboxyphenylamino)-1-deoxy-D-ribulose 5-phosphate + H(+) = (1S,2R)-1-C-(indol-3-yl)glycerol 3-phosphate + CO2 + H2O. It participates in amino-acid biosynthesis; L-tryptophan biosynthesis; L-tryptophan from chorismate: step 4/5. The protein is Indole-3-glycerol phosphate synthase of Metallosphaera sedula (strain ATCC 51363 / DSM 5348 / JCM 9185 / NBRC 15509 / TH2).